Here is a 179-residue protein sequence, read N- to C-terminus: Large ribosomal subunit protein uL5 (179 aa).

Belongs to the universal ribosomal protein uL5 family. In terms of assembly, part of the 50S ribosomal subunit; part of the 5S rRNA/L5/L18/L25 subcomplex. Contacts the 5S rRNA and the P site tRNA. Forms a bridge to the 30S subunit in the 70S ribosome.

In terms of biological role, this is one of the proteins that bind and probably mediate the attachment of the 5S RNA into the large ribosomal subunit, where it forms part of the central protuberance. In the 70S ribosome it contacts protein S13 of the 30S subunit (bridge B1b), connecting the 2 subunits; this bridge is implicated in subunit movement. Contacts the P site tRNA; the 5S rRNA and some of its associated proteins might help stabilize positioning of ribosome-bound tRNAs. This is Large ribosomal subunit protein uL5 from Shewanella piezotolerans (strain WP3 / JCM 13877).